A 161-amino-acid chain; its full sequence is Arachidonate 5-lipoxygenase-activating protein (161 aa).

Residues 1-8 (MDQETVGN) lie on the Lumenal side of the membrane. A helical transmembrane segment spans residues 9 to 30 (VVLLAIVTLISVVQNGFFAHKV). Over 31–52 (EHESRTQNGRSFQRTGTLAFER) the chain is Cytoplasmic. Residues 53–77 (VYTANQNCVDAYPTFLAVLWSAGLL) form a helical membrane-spanning segment. Topologically, residues 78 to 80 (CSQ) are lumenal. The chain crosses the membrane as a helical span at residues 81–102 (VPAAFAGLMYLFVRQKYFVGYL). Residues 103–107 (GERTQ) lie on the Cytoplasmic side of the membrane. An intramembrane segment occupies 108–115 (STPGYIFG). The chain crosses the membrane as a helical span at residues 116–128 (KRIILFLFLMSVA). Residues 129 to 161 (GIFNYYLIFFFGSDFENYIKTISTTISPLLLIP) lie on the Lumenal side of the membrane.

Belongs to the MAPEG family. In terms of assembly, homotrimer. Interacts with LTC4S and ALOX5.

Its subcellular location is the nucleus membrane. The protein localises to the endoplasmic reticulum membrane. Required for leukotriene biosynthesis by ALOX5 (5-lipoxygenase). Anchors ALOX5 to the membrane. Binds arachidonic acid, and could play an essential role in the transfer of arachidonic acid to ALOX5. Binds to MK-886, a compound that blocks the biosynthesis of leukotrienes. The protein is Arachidonate 5-lipoxygenase-activating protein (ALOX5AP) of Homo sapiens (Human).